The primary structure comprises 117 residues: Large ribosomal subunit protein uL24 (117 aa).

Belongs to the universal ribosomal protein uL24 family. Part of the 50S ribosomal subunit.

Functionally, one of two assembly initiator proteins, it binds directly to the 5'-end of the 23S rRNA, where it nucleates assembly of the 50S subunit. One of the proteins that surrounds the polypeptide exit tunnel on the outside of the subunit. The chain is Large ribosomal subunit protein uL24 from Trichormus variabilis (strain ATCC 29413 / PCC 7937) (Anabaena variabilis).